The primary structure comprises 626 residues: Janus kinase and microtubule-interacting protein 1 (626 aa).

The interval 1–25 (MSKKGRSKGDKPEAETDSVQMANEE) is disordered. A mediates association with microtubules region spans residues 1-365 (MSKKGRSKGD…KLKSLTRENV (365 aa)). Coiled-coil stretches lie at residues 13–255 (EAET…EAER) and 284–413 (ERDV…DDLS). The tract at residues 365 to 626 (VEMKEKLSAQ…ILFEPKLKFM (262 aa)) is mediates interaction with TYK2 and GABBR1. A Phosphoserine modification is found at S382. The span at 452–461 (ETLSETSYNT) shows a compositional bias: polar residues. The interval 452–481 (ETLSETSYNTDRTDRTPATPEEDLDETTTR) is disordered. T470 carries the phosphothreonine modification. A coiled-coil region spans residues 490–604 (QLTREYQALQ…EFRVLELEVR (115 aa)).

This sequence belongs to the JAKMIP family. In terms of assembly, homodimer. Interacts with JAK1 and TYK2. Forms a complex with GABBR1 and KIF5B/kinesin-1. Phosphorylated.

Its subcellular location is the cytoplasm. The protein resides in the cytoskeleton. It localises to the membrane. Its function is as follows. Associates with microtubules and may play a role in the microtubule-dependent transport of the GABA-B receptor. May play a role in JAK1 signaling and regulate microtubule cytoskeleton rearrangements. This Mus musculus (Mouse) protein is Janus kinase and microtubule-interacting protein 1 (Jakmip1).